Here is a 66-residue protein sequence, read N- to C-terminus: Large ribosomal subunit protein uL29 (66 aa).

Belongs to the universal ribosomal protein uL29 family.

The protein is Large ribosomal subunit protein uL29 of Thermotoga sp. (strain RQ2).